A 3165-amino-acid polypeptide reads, in one-letter code: ORFB polyprotein (3165 aa).

The Peptidase C8 domain maps to 271-418 (MARSIGLSHE…LENEPDILVG (148 aa)). Residues cysteine 341 and histidine 388 each act as for papain-like protease p48 activity in the active site. The tract at residues 453-472 (AEPGQRAKDNTNPSTPRPIE) is disordered. 6 consecutive transmembrane segments (helical) span residues 791–811 (IMIA…YVPY), 823–843 (YILL…GYAC), 1166–1186 (AGLF…AAIM), 1193–1213 (KYLV…KALW), 1215–1235 (FPIF…VSVY), and 1356–1376 (ALGF…LRPP). The tract at residues 1793–2208 (FYKSRKALKQ…AEDSADYRAW (416 aa)) is RNA-directed RNA polymerase. The next 3 helical transmembrane spans lie at 2495-2515 (VRIY…MHWV), 2517-2537 (LFIQ…WSFW), and 2590-2610 (LGIV…EVLF). The region spanning 2651–2796 (ATKAIEHGHV…IPFLEPTLPK (146 aa)) is the Helicase ATP-binding domain. Residue 2664–2671 (AKTASGKS) participates in ATP binding. The DEFH box signature appears at 2751–2754 (DEFH).

It in the C-terminal section; belongs to the DEAD box helicase family. Papain-like protease p48 is autocatalytically processed. The putative RNA-directed RNA polymerase/helicase may be further processed.

It localises to the host membrane. The catalysed reaction is RNA(n) + a ribonucleoside 5'-triphosphate = RNA(n+1) + diphosphate. It catalyses the reaction ATP + H2O = ADP + phosphate + H(+). In terms of biological role, papain-like protease p48 is a cysteine protease of the peptidase family C8. This Cryphonectria hypovirus 1 (strain EP713) (CHV-1/EP713) protein is ORFB polyprotein.